The sequence spans 285 residues: Bifunctional protein FolD (285 aa).

NADP(+) is bound by residues 166–168 (GAS) and I232.

The protein belongs to the tetrahydrofolate dehydrogenase/cyclohydrolase family. Homodimer.

The enzyme catalyses (6R)-5,10-methylene-5,6,7,8-tetrahydrofolate + NADP(+) = (6R)-5,10-methenyltetrahydrofolate + NADPH. The catalysed reaction is (6R)-5,10-methenyltetrahydrofolate + H2O = (6R)-10-formyltetrahydrofolate + H(+). It functions in the pathway one-carbon metabolism; tetrahydrofolate interconversion. Catalyzes the oxidation of 5,10-methylenetetrahydrofolate to 5,10-methenyltetrahydrofolate and then the hydrolysis of 5,10-methenyltetrahydrofolate to 10-formyltetrahydrofolate. The protein is Bifunctional protein FolD of Aliivibrio salmonicida (strain LFI1238) (Vibrio salmonicida (strain LFI1238)).